Reading from the N-terminus, the 291-residue chain is Bis(5'-nucleosyl)-tetraphosphatase, symmetrical (291 aa).

The protein belongs to the Ap4A hydrolase family.

It catalyses the reaction P(1),P(4)-bis(5'-adenosyl) tetraphosphate + H2O = 2 ADP + 2 H(+). Functionally, hydrolyzes diadenosine 5',5'''-P1,P4-tetraphosphate to yield ADP. The sequence is that of Bis(5'-nucleosyl)-tetraphosphatase, symmetrical from Coxiella burnetii (strain RSA 331 / Henzerling II).